The following is a 114-amino-acid chain: uncharacterized protein (114 aa).

Basic residues predominate over residues 18–29 (TRKRNSHKKVTK). 2 disordered regions span residues 18–47 (TRKRNSHKKVTKRAVEKRKQDSTRQKRRTG) and 65–108 (SRPR…KLLN). The segment covering 30-41 (RAVEKRKQDSTR) has biased composition (basic and acidic residues).

This is an uncharacterized protein from Homo sapiens (Human).